The sequence spans 320 residues: Ferrochelatase (320 aa).

Residues His-194 and Glu-275 each contribute to the Fe cation site.

The protein belongs to the ferrochelatase family. In terms of assembly, monomer.

It is found in the cytoplasm. The catalysed reaction is heme b + 2 H(+) = protoporphyrin IX + Fe(2+). It functions in the pathway porphyrin-containing compound metabolism; protoheme biosynthesis; protoheme from protoporphyrin-IX: step 1/1. Functionally, catalyzes the ferrous insertion into protoporphyrin IX. In Salmonella agona (strain SL483), this protein is Ferrochelatase.